A 358-amino-acid polypeptide reads, in one-letter code: Cinnamyl alcohol dehydrogenase 1 (358 aa).

The region spanning 21–349 is the Enoyl reductase (ER) domain; the sequence is GILTPYTYTL…KNDVRYRFVV (329 aa). Residue Cys48 coordinates Zn(2+). Ser50 provides a ligand contact to NADP(+). Zn(2+) contacts are provided by His70, Glu71, Cys101, Cys104, Cys107, Cys115, and Cys164. NADP(+) contacts are provided by residues Thr168, 189-194, 212-217, Thr252, Gly276, and 299-301; these read GLGGVG, SSSDKK, and SFV.

Belongs to the zinc-containing alcohol dehydrogenase family. Homodimer. It depends on Zn(2+) as a cofactor.

The catalysed reaction is (E)-cinnamyl alcohol + NADP(+) = (E)-cinnamaldehyde + NADPH + H(+). The enzyme catalyses (E)-coniferol + NADP(+) = (E)-coniferaldehyde + NADPH + H(+). It carries out the reaction (E)-sinapyl alcohol + NADP(+) = (E)-sinapaldehyde + NADPH + H(+). It catalyses the reaction (E)-4-coumaroyl alcohol + NADP(+) = (E)-4-coumaraldehyde + NADPH + H(+). The protein operates within aromatic compound metabolism; phenylpropanoid biosynthesis. Its function is as follows. Involved in lignin biosynthesis. Catalyzes the final step specific for the production of lignin monomers. Catalyzes the NADPH-dependent reduction of coniferaldehyde, 5-hydroxyconiferaldehyde, sinapaldehyde, 4-coumaraldehyde and caffeyl aldehyde to their respective alcohols. Can use coumaraldehyde and, with a lower efficiency, coniferaldehyde and sinapaldehyde as substrates. The protein is Cinnamyl alcohol dehydrogenase 1 of Medicago truncatula (Barrel medic).